The following is a 278-amino-acid chain: Betaine--homocysteine S-methyltransferase 1 (278 aa).

Residues Lys11 to Arg278 enclose the Hcy-binding domain. Lys40, Lys93, and Lys98 each carry N6-succinyllysine. Position 217 (Cys217) interacts with Zn(2+). Lys232 and Lys241 each carry N6-succinyllysine.

As to quaternary structure, homotetramer. It depends on Zn(2+) as a cofactor. As to expression, found exclusively in liver and kidney.

The protein resides in the cytoplasm. It is found in the cytosol. The protein localises to the nucleus. The enzyme catalyses L-homocysteine + glycine betaine = N,N-dimethylglycine + L-methionine. The protein operates within amine and polyamine degradation; betaine degradation; sarcosine from betaine: step 1/2. It functions in the pathway amino-acid biosynthesis; L-methionine biosynthesis via de novo pathway; L-methionine from L-homocysteine (BhmT route): step 1/1. With respect to regulation, inhibited by dimethylglycine and methylthioacetate. In terms of biological role, involved in the regulation of homocysteine metabolism. Converts betaine and homocysteine to dimethylglycine and methionine, respectively. This reaction is also required for the irreversible oxidation of choline. This Sus scrofa (Pig) protein is Betaine--homocysteine S-methyltransferase 1.